The primary structure comprises 63 residues: Bowman-Birk type proteinase inhibitor (63 aa).

Cystine bridges form between cysteine 7–cysteine 60, cysteine 8–cysteine 23, cysteine 11–cysteine 56, cysteine 13–cysteine 21, cysteine 30–cysteine 37, cysteine 34–cysteine 49, and cysteine 39–cysteine 47.

Monomer.

Functionally, inhibits trypsin stoichiometrically at the molar ratio of 1:2, with a dissociation constant of 4.2 nM. Does not inhibit chymotrypsin. The chain is Bowman-Birk type proteinase inhibitor from Lupinus albus (White lupine).